The following is a 492-amino-acid chain: Catalase isozyme C (492 aa).

Position 62 (arginine 62) interacts with heme. Histidine 65 is an active-site residue. Arginine 102 contributes to the heme binding site. The active site involves asparagine 138. Residue phenylalanine 151 coordinates heme. Tyrosine 210 is modified (phosphotyrosine; by STRK1). A cross-link (3-(S-cysteinyl)-tyrosine (Cys-Tyr)) is located at residues 325–348 (CPGIIVPGIYYSDDKLLQTRIFSY). Heme is bound by residues arginine 344, tyrosine 348, and arginine 355. Residues 484–492 (SRLSAKPSM) carry the Peroxisome targeting signal motif.

This sequence belongs to the catalase family. As to quaternary structure, homotetramer. Interacts with GLO1 and GLO4; these interactions are disturbed by alpha-hydroxy-2-pyridinemethanesulfonic acid (HPMS) and salicylic acid (SA). Interacts with STRK1 at the plasma membrane. Heme serves as cofactor. In terms of processing, activated by STRK1-mediated phosphorylation at Tyr-210 upon salt and oxidative stress. In terms of tissue distribution, highly expressed in mature leaves. Mainly expressed in leaf blades, stems, panicles, leaf sheaths, and culms, but barely in roots.

The protein localises to the peroxisome. The protein resides in the glyoxysome. It is found in the cell membrane. The catalysed reaction is 2 H2O2 = O2 + 2 H2O. Its activity is regulated as follows. Strongly inhibited by beta-mercaptoethanol, sodium azide and potassium cyanide. Slightly repressed by 3-amino-1,2,4-triazole (3-AT). Activity is repressed proportionally to increased concentration of NaCl, KCl, LiCl and MgCl(2). Its function is as follows. Occurs in almost all aerobically respiring organisms and serves to protect cells from the toxic effects of hydrogen peroxide. Responsible for the redox homeostasis in leaves. Prevents nitric oxide (NO) accumulation and subsequent NO-mediated leaf cell death as well as the S-nitrosylation of specific proteins (e.g. glyceraldehyde 3-phosphate dehydrogenase and thioredoxin) by degrading H(2)O(2). Involved in photorespiration. Promotes drought stress tolerance and recovery. Involved in NO-mediated enhanced tolerance to zinc oxide nanoparticles (ZnO NPs)-induced phytotoxicity. Participates in melatonin-mediated detoxification. This is Catalase isozyme C from Oryza sativa subsp. japonica (Rice).